A 674-amino-acid polypeptide reads, in one-letter code: Methionine--tRNA ligase (674 aa).

Residues Pro11–His21 carry the 'HIGH' region motif. Zn(2+)-binding residues include Cys142, Cys145, Cys155, and Cys158. The 'KMSKS' region signature appears at Lys330–Ser334. Residue Lys333 coordinates ATP. The region spanning Asp574–Lys674 is the tRNA-binding domain.

Belongs to the class-I aminoacyl-tRNA synthetase family. MetG type 1 subfamily. Homodimer. Zn(2+) serves as cofactor.

The protein localises to the cytoplasm. The catalysed reaction is tRNA(Met) + L-methionine + ATP = L-methionyl-tRNA(Met) + AMP + diphosphate. Is required not only for elongation of protein synthesis but also for the initiation of all mRNA translation through initiator tRNA(fMet) aminoacylation. The chain is Methionine--tRNA ligase from Francisella tularensis subsp. holarctica (strain FTNF002-00 / FTA).